A 234-amino-acid chain; its full sequence is Orotidine 5'-phosphate decarboxylase (234 aa).

Residues Asp-17, Lys-38, 65–74, Thr-122, Arg-184, Gln-193, Gly-213, and Arg-214 each bind substrate; that span reads DLKLHDIPNT. Catalysis depends on Lys-67, which acts as the Proton donor.

The protein belongs to the OMP decarboxylase family. Type 1 subfamily. In terms of assembly, homodimer.

It carries out the reaction orotidine 5'-phosphate + H(+) = UMP + CO2. It participates in pyrimidine metabolism; UMP biosynthesis via de novo pathway; UMP from orotate: step 2/2. Functionally, catalyzes the decarboxylation of orotidine 5'-monophosphate (OMP) to uridine 5'-monophosphate (UMP). The polypeptide is Orotidine 5'-phosphate decarboxylase (Thermosynechococcus vestitus (strain NIES-2133 / IAM M-273 / BP-1)).